The following is a 1209-amino-acid chain: Phospholipid-transporting ATPase ID (1209 aa).

Residues Met1 to Leu68 are Cytoplasmic-facing. A disordered region spans residues Ala12–Arg36. A helical transmembrane segment spans residues Phe69 to Ile89. Residues Pro90–Gln91 are Exoplasmic loop-facing. Residues Ile92–Ala112 traverse the membrane as a helical segment. Topologically, residues Val113–Leu295 are cytoplasmic. A helical membrane pass occupies residues Val296–Ile316. The Exoplasmic loop portion of the chain corresponds to Trp317–Ala338. The helical transmembrane segment at Phe339–Ile359 threads the bilayer. Over Ser360–Asn898 the chain is Cytoplasmic. The active-site 4-aspartylphosphate intermediate is the Asp411. Positions 411, 412, 413, 515, 556, 579, 613, 693, 694, 695, 807, and 813 each coordinate ATP. Asp411 contacts Mg(2+). Thr413 is a binding site for Mg(2+). Asp833 is a binding site for Mg(2+). Positions 836 and 837 each coordinate ATP. Asp837 contacts Mg(2+). Residues Phe899–Val919 form a helical membrane-spanning segment. At Tyr920–Gln922 the chain is on the exoplasmic loop side. Residues Tyr923–Phe943 traverse the membrane as a helical segment. Residues Asp944 to Glu972 lie on the Cytoplasmic side of the membrane. Residues Phe973–Gly993 form a helical membrane-spanning segment. Residues Val994–Ser1011 are Exoplasmic loop-facing. The helical transmembrane segment at Phe1012 to Thr1032 threads the bilayer. Topologically, residues Gly1033–Thr1036 are cytoplasmic. The helical transmembrane segment at Ala1037–Met1057 threads the bilayer. Topologically, residues His1058–Gln1082 are exoplasmic loop. Residues Pro1083–Phe1103 traverse the membrane as a helical segment. Over Arg1104–Gly1209 the chain is Cytoplasmic. Ser1175 carries the post-translational modification Phosphoserine. Residues Arg1179 to Gly1209 are disordered.

Belongs to the cation transport ATPase (P-type) (TC 3.A.3) family. Type IV subfamily. Component of a P4-ATPase flippase complex which consists of a catalytic alpha subunit ATP8B2 and an accessory beta subunit TMEM30A or TMEM30B. Mg(2+) is required as a cofactor. Expressed in brain and testes (at protein level).

Its subcellular location is the cell membrane. It is found in the endoplasmic reticulum membrane. It carries out the reaction ATP + H2O + phospholipidSide 1 = ADP + phosphate + phospholipidSide 2.. The catalysed reaction is a 1,2-diacyl-sn-glycero-3-phosphocholine(out) + ATP + H2O = a 1,2-diacyl-sn-glycero-3-phosphocholine(in) + ADP + phosphate + H(+). Catalytic component of P4-ATPase flippase complex, which catalyzes the hydrolysis of ATP coupled to the transport of phosphatidylcholine (PC) from the outer to the inner leaflet of the plasma membrane. May contribute to the maintenance of membrane lipid asymmetry. This chain is Phospholipid-transporting ATPase ID, found in Mus musculus (Mouse).